Reading from the N-terminus, the 294-residue chain is Proteasome subunit beta (294 aa).

Positions M1–G65 are cleaved as a propeptide — removed in mature form; by autocatalysis. T66 serves as the catalytic Nucleophile.

The protein belongs to the peptidase T1B family. As to quaternary structure, the 20S proteasome core is composed of 14 alpha and 14 beta subunits that assemble into four stacked heptameric rings, resulting in a barrel-shaped structure. The two inner rings, each composed of seven catalytic beta subunits, are sandwiched by two outer rings, each composed of seven alpha subunits. The catalytic chamber with the active sites is on the inside of the barrel. Has a gated structure, the ends of the cylinder being occluded by the N-termini of the alpha-subunits. Is capped by the proteasome-associated ATPase, ARC.

Its subcellular location is the cytoplasm. The enzyme catalyses Cleavage of peptide bonds with very broad specificity.. The protein operates within protein degradation; proteasomal Pup-dependent pathway. With respect to regulation, the formation of the proteasomal ATPase ARC-20S proteasome complex, likely via the docking of the C-termini of ARC into the intersubunit pockets in the alpha-rings, may trigger opening of the gate for substrate entry. Interconversion between the open-gate and close-gate conformations leads to a dynamic regulation of the 20S proteasome proteolysis activity. Its function is as follows. Component of the proteasome core, a large protease complex with broad specificity involved in protein degradation. The sequence is that of Proteasome subunit beta from Rhodococcus opacus (strain B4).